The chain runs to 271 residues: Keratin-associated protein 10-5 (271 aa).

Tandem repeats lie at residues 26 to 30 (CCEPP), 51 to 55 (CCQAA), 73 to 77 (CCQPA), 78 to 82 (CCASS), 88 to 92 (CCVPV), 93 to 97 (CCKPV), 98 to 102 (CCLPT), 110 to 114 (CCQQS), 120 to 124 (CCASS), 130 to 134 (CCVPV), 135 to 139 (CCKPV), 140 to 144 (CCVPT), 152 to 156 (CCQHS), 162 to 166 (CCTSS), 177 to 181 (CCKPV), 187 to 191 (CCVPV), 199 to 203 (CCQQS), 209 to 213 (CCTTS), 214 to 218 (CCRPS), 233 to 237 (CCLPI), 240 to 244 (CCAPA), and 251 to 255 (CCRPA). The tract at residues 26–255 (CCEPPCGTAP…SYQASCCRPA (230 aa)) is 22 X 5 AA repeats of C-C-X(3).

This sequence belongs to the KRTAP type 10 family. As to quaternary structure, interacts with hair keratins. In terms of tissue distribution, restricted to a narrow region of the hair fiber cuticle, lying approximately 20 cell layers above the apex of the dermal papilla of the hair root; not detected in any other tissues.

Functionally, in the hair cortex, hair keratin intermediate filaments are embedded in an interfilamentous matrix, consisting of hair keratin-associated proteins (KRTAP), which are essential for the formation of a rigid and resistant hair shaft through their extensive disulfide bond cross-linking with abundant cysteine residues of hair keratins. The matrix proteins include the high-sulfur and high-glycine-tyrosine keratins. In Homo sapiens (Human), this protein is Keratin-associated protein 10-5 (KRTAP10-5).